The sequence spans 331 residues: Trans-O-hydroxybenzylidenepyruvate hydratase-aldolase (331 aa).

Belongs to the DapA family.

It catalyses the reaction (3E)-4-(2-hydroxyphenyl)-2-oxobut-3-enoate + H2O = salicylaldehyde + pyruvate. It functions in the pathway aromatic compound metabolism; naphthalene degradation. Functionally, involved in the naphthalene upper catabolic pathway. Catalyzes the transformation of trans-O-hydroxybenzylidenepyruvate (THBPA) to salicylaldehyde and pyruvate. The reaction is reversible. Can also use substrate which carry trans-alpha,beta-unsaturated keto acid side chain and adjacent hydroxyl group such as trans-4-(3-hydroxy-2-thianaphthenyl)-2-oxo-but-3-enoate, trans-4-(3-hydroxy-2-benzofuranyl)-2-oxobut-3-enoate, and trans-4-(3-hydroxy-2-thienyl)-2-oxobut-3-enoate. The polypeptide is Trans-O-hydroxybenzylidenepyruvate hydratase-aldolase (nahE) (Pseudomonas putida (Arthrobacter siderocapsulatus)).